The primary structure comprises 338 residues: 1-aminocyclopropane-1-carboxylate deaminase (338 aa).

Residue lysine 51 is modified to N6-(pyridoxal phosphate)lysine. The active-site Nucleophile is serine 78.

This sequence belongs to the ACC deaminase/D-cysteine desulfhydrase family. As to quaternary structure, homotrimer. Pyridoxal 5'-phosphate is required as a cofactor.

It carries out the reaction 1-aminocyclopropane-1-carboxylate + H2O = 2-oxobutanoate + NH4(+). Its function is as follows. Catalyzes a cyclopropane ring-opening reaction, the irreversible conversion of 1-aminocyclopropane-1-carboxylate (ACC) to ammonia and alpha-ketobutyrate. Allows growth on ACC as a nitrogen source. This chain is 1-aminocyclopropane-1-carboxylate deaminase, found in Acidovorax ebreus (strain TPSY) (Diaphorobacter sp. (strain TPSY)).